Reading from the N-terminus, the 86-residue chain is Small ribosomal subunit protein bS20 (86 aa).

Belongs to the bacterial ribosomal protein bS20 family.

Functionally, binds directly to 16S ribosomal RNA. This chain is Small ribosomal subunit protein bS20, found in Arthrobacter sp. (strain FB24).